Reading from the N-terminus, the 379-residue chain is MSEFLPFSRPAMGVEELAAVKEVLESGWLTTGPKNQALEQAFCQLTGNQHAIAVSSATAGMHITLMALEIGKGDEVITPSLTWVSTLNMISLLGATPVMVDVDRDTLMVTPEAIESAITPRTKAIIPVHYAGAPADIDAIRAIGERYGIAVIEDAAHAVGTYYKGRHIGAKGTAIFSFHAIKNITCAEGGLIVTDNENLARQLRMLKFHGLGVDAYDRQTWGRAPQAEVLTPGYKYNLTDINAAIALTQLAKLEHLNTRRREIAQQYQQALAALPFQPLSLPAWPHVHAWHLFIIRVDEQRCGISRDALMEALKERGIGTGLHFRAAHTQKYYRERFPTLSLPNTEWNSERICSLPLFPDMTTADADRVITALQQLAGQ.

Lys-182 carries the N6-(pyridoxal phosphate)lysine modification.

It belongs to the DegT/DnrJ/EryC1 family. ArnB subfamily. As to quaternary structure, homodimer. Pyridoxal 5'-phosphate is required as a cofactor.

It carries out the reaction UDP-4-amino-4-deoxy-beta-L-arabinose + 2-oxoglutarate = UDP-beta-L-threo-pentopyranos-4-ulose + L-glutamate. It participates in nucleotide-sugar biosynthesis; UDP-4-deoxy-4-formamido-beta-L-arabinose biosynthesis; UDP-4-deoxy-4-formamido-beta-L-arabinose from UDP-alpha-D-glucuronate: step 2/3. It functions in the pathway bacterial outer membrane biogenesis; lipopolysaccharide biosynthesis. Its function is as follows. Catalyzes the conversion of UDP-4-keto-arabinose (UDP-Ara4O) to UDP-4-amino-4-deoxy-L-arabinose (UDP-L-Ara4N). The modified arabinose is attached to lipid A and is required for resistance to polymyxin and cationic antimicrobial peptides. The polypeptide is UDP-4-amino-4-deoxy-L-arabinose--oxoglutarate aminotransferase (Escherichia coli O8 (strain IAI1)).